Here is a 59-residue protein sequence, read N- to C-terminus: U-actitoxin-Aer2a (59 aa).

Post-translationally, contains 5 disulfide bonds.

The protein localises to the secreted. It localises to the nematocyst. The protein is U-actitoxin-Aer2a of Anemonia erythraea (Sea anemone).